We begin with the raw amino-acid sequence, 180 residues long: ATP-dependent protease subunit HslV (180 aa).

Thr7 is a catalytic residue. Na(+) is bound by residues Ala163, Cys166, and Thr169.

This sequence belongs to the peptidase T1B family. HslV subfamily. A double ring-shaped homohexamer of HslV is capped on each side by a ring-shaped HslU homohexamer. The assembly of the HslU/HslV complex is dependent on binding of ATP.

It localises to the cytoplasm. The enzyme catalyses ATP-dependent cleavage of peptide bonds with broad specificity.. Its activity is regulated as follows. Allosterically activated by HslU binding. In terms of biological role, protease subunit of a proteasome-like degradation complex believed to be a general protein degrading machinery. This is ATP-dependent protease subunit HslV from Cytophaga hutchinsonii (strain ATCC 33406 / DSM 1761 / CIP 103989 / NBRC 15051 / NCIMB 9469 / D465).